Here is a 361-residue protein sequence, read N- to C-terminus: Chorismate synthase (361 aa).

Positions 48 and 54 each coordinate NADP(+). FMN-binding positions include 125–127 (RSS), 238–239 (NA), glycine 278, 293–297 (KPTSS), and arginine 319.

The protein belongs to the chorismate synthase family. As to quaternary structure, homotetramer. It depends on FMNH2 as a cofactor.

The catalysed reaction is 5-O-(1-carboxyvinyl)-3-phosphoshikimate = chorismate + phosphate. Its pathway is metabolic intermediate biosynthesis; chorismate biosynthesis; chorismate from D-erythrose 4-phosphate and phosphoenolpyruvate: step 7/7. Functionally, catalyzes the anti-1,4-elimination of the C-3 phosphate and the C-6 proR hydrogen from 5-enolpyruvylshikimate-3-phosphate (EPSP) to yield chorismate, which is the branch point compound that serves as the starting substrate for the three terminal pathways of aromatic amino acid biosynthesis. This reaction introduces a second double bond into the aromatic ring system. The polypeptide is Chorismate synthase (Proteus mirabilis (strain HI4320)).